The chain runs to 164 residues: Cyclic pyranopterin monophosphate synthase (164 aa).

Substrate contacts are provided by residues 73–75 and 111–112; these read LCH and ME. Asp-126 is a catalytic residue.

The protein belongs to the MoaC family. Homohexamer; trimer of dimers.

The enzyme catalyses (8S)-3',8-cyclo-7,8-dihydroguanosine 5'-triphosphate = cyclic pyranopterin phosphate + diphosphate. It participates in cofactor biosynthesis; molybdopterin biosynthesis. Catalyzes the conversion of (8S)-3',8-cyclo-7,8-dihydroguanosine 5'-triphosphate to cyclic pyranopterin monophosphate (cPMP). This Herpetosiphon aurantiacus (strain ATCC 23779 / DSM 785 / 114-95) protein is Cyclic pyranopterin monophosphate synthase.